Consider the following 300-residue polypeptide: 4-hydroxy-tetrahydrodipicolinate synthase (300 aa).

Thr54 lines the pyruvate pocket. Tyr142 serves as the catalytic Proton donor/acceptor. Lys170 functions as the Schiff-base intermediate with substrate in the catalytic mechanism. Ile212 lines the pyruvate pocket.

This sequence belongs to the DapA family. Homotetramer; dimer of dimers.

It is found in the cytoplasm. It catalyses the reaction L-aspartate 4-semialdehyde + pyruvate = (2S,4S)-4-hydroxy-2,3,4,5-tetrahydrodipicolinate + H2O + H(+). It participates in amino-acid biosynthesis; L-lysine biosynthesis via DAP pathway; (S)-tetrahydrodipicolinate from L-aspartate: step 3/4. In terms of biological role, catalyzes the condensation of (S)-aspartate-beta-semialdehyde [(S)-ASA] and pyruvate to 4-hydroxy-tetrahydrodipicolinate (HTPA). The protein is 4-hydroxy-tetrahydrodipicolinate synthase of Halorhodospira halophila (strain DSM 244 / SL1) (Ectothiorhodospira halophila (strain DSM 244 / SL1)).